The following is a 203-amino-acid chain: Pectinesterase inhibitor 12 (203 aa).

Residues 1–26 (MRMSKALAAVVAISVSLSAAAMGVDA) form the signal peptide. Disulfide bonds link Cys-32–Cys-47 and Cys-100–Cys-140.

This sequence belongs to the PMEI family.

The protein localises to the secreted. Its subcellular location is the extracellular space. It localises to the apoplast. Functionally, pectin methylesterase (PME) inhibitor that inhibits PME in vitro. The protein is Pectinesterase inhibitor 12 of Oryza sativa subsp. japonica (Rice).